The sequence spans 50 residues: Sperm protamine P1 (50 aa).

Cystine bridges form between C7–C15 and C38–C46.

The protein belongs to the protamine P1 family. In terms of assembly, cross-linked by interchain disulfide bonds around the DNA-helix. As to expression, testis.

Its subcellular location is the nucleus. The protein localises to the chromosome. Protamines substitute for histones in the chromatin of sperm during the haploid phase of spermatogenesis. They compact sperm DNA into a highly condensed, stable and inactive complex. This is Sperm protamine P1 (PRM1) from Equus asinus (Donkey).